Consider the following 447-residue polypeptide: Protein king tubby (447 aa).

Composition is skewed to low complexity over residues 71–92 (GTGP…YSDS) and 157–169 (NNNN…NSSS). A disordered region spans residues 71–196 (GTGPNVTATS…GGAPDTEGDV (126 aa)).

Belongs to the TUB family.

The protein localises to the cytoplasm. The protein resides in the nucleus. The protein is Protein king tubby of Anopheles gambiae (African malaria mosquito).